The primary structure comprises 293 residues: Nucleotide-binding protein BCQ_4976 (293 aa).

ATP is bound at residue G14–T21. Residue D65–G68 coordinates GTP.

It belongs to the RapZ-like family.

Displays ATPase and GTPase activities. This chain is Nucleotide-binding protein BCQ_4976, found in Bacillus cereus (strain Q1).